A 502-amino-acid polypeptide reads, in one-letter code: Maturase K (502 aa).

The protein belongs to the intron maturase 2 family. MatK subfamily.

Its subcellular location is the plastid. It is found in the chloroplast. Its function is as follows. Usually encoded in the trnK tRNA gene intron. Probably assists in splicing its own and other chloroplast group II introns. This chain is Maturase K, found in Spiraea cantoniensis (Reeve's meadowsweet).